Here is a 414-residue protein sequence, read N- to C-terminus: Succinylornithine transaminase (414 aa).

Lys260 is subject to N6-(pyridoxal phosphate)lysine.

The protein belongs to the class-III pyridoxal-phosphate-dependent aminotransferase family. AstC subfamily. It depends on pyridoxal 5'-phosphate as a cofactor.

It catalyses the reaction N(2)-succinyl-L-ornithine + 2-oxoglutarate = N-succinyl-L-glutamate 5-semialdehyde + L-glutamate. Its pathway is amino-acid degradation; L-arginine degradation via AST pathway; L-glutamate and succinate from L-arginine: step 3/5. Catalyzes the transamination of N(2)-succinylornithine and alpha-ketoglutarate into N(2)-succinylglutamate semialdehyde and glutamate. Can also act as an acetylornithine aminotransferase. This is Succinylornithine transaminase from Yersinia enterocolitica serotype O:8 / biotype 1B (strain NCTC 13174 / 8081).